Consider the following 502-residue polypeptide: Histidine--tRNA ligase (502 aa).

Belongs to the class-II aminoacyl-tRNA synthetase family. As to quaternary structure, homodimer.

The protein localises to the cytoplasm. The catalysed reaction is tRNA(His) + L-histidine + ATP = L-histidyl-tRNA(His) + AMP + diphosphate + H(+). This is Histidine--tRNA ligase from Brucella ovis (strain ATCC 25840 / 63/290 / NCTC 10512).